Here is a 289-residue protein sequence, read N- to C-terminus: Spore coat polysaccharide biosynthesis protein SpsD (289 aa).

One can recognise an N-acetyltransferase domain in the interval 137-289; that stretch reads FELGPPEPGD…YHIWPGKEAK (153 aa).

The protein operates within spore coat biogenesis; spore coat polysaccharide biosynthesis. The chain is Spore coat polysaccharide biosynthesis protein SpsD (spsD) from Bacillus subtilis (strain 168).